Reading from the N-terminus, the 214-residue chain is Adenylate kinase (214 aa).

An ATP-binding site is contributed by G10–T15. Positions S30 to V59 are NMP. AMP is bound by residues T31, R36, Q57 to V59, G85 to R88, and Q92. The LID stretch occupies residues G122 to D159. Residues R123 and T132–Y133 contribute to the ATP site. AMP-binding residues include R156 and R167. An ATP-binding site is contributed by K200.

Belongs to the adenylate kinase family. In terms of assembly, monomer.

Its subcellular location is the cytoplasm. It carries out the reaction AMP + ATP = 2 ADP. The protein operates within purine metabolism; AMP biosynthesis via salvage pathway; AMP from ADP: step 1/1. In terms of biological role, catalyzes the reversible transfer of the terminal phosphate group between ATP and AMP. Plays an important role in cellular energy homeostasis and in adenine nucleotide metabolism. In Vibrio cholerae serotype O1 (strain ATCC 39541 / Classical Ogawa 395 / O395), this protein is Adenylate kinase.